The primary structure comprises 338 residues: Methionine aminopeptidase 1D, mitochondrial (338 aa).

A mitochondrion-targeting transit peptide spans 1-47; sequence MAAPCAAQCLYRTGGLRLLQRISRLPHCHKDASLAHQCQFHRSFFWR. Residue His-164 coordinates substrate. A divalent metal cation-binding residues include Asp-181, Asp-192, and His-255. His-262 is a binding site for substrate. 2 residues coordinate a divalent metal cation: Glu-287 and Glu-318.

This sequence belongs to the peptidase M24A family. Methionine aminopeptidase type 1 subfamily. The cofactor is Co(2+). Zn(2+) serves as cofactor. Mn(2+) is required as a cofactor. It depends on Fe(2+) as a cofactor.

Its subcellular location is the mitochondrion. It carries out the reaction Release of N-terminal amino acids, preferentially methionine, from peptides and arylamides.. Its function is as follows. Removes the N-terminal methionine from nascent proteins. The N-terminal methionine is often cleaved when the second residue in the primary sequence is small and uncharged (Met-Ala-, Cys, Gly, Pro, Ser, Thr, or Val). Requires deformylation of the N(alpha)-formylated initiator methionine before it can be hydrolyzed. The sequence is that of Methionine aminopeptidase 1D, mitochondrial (metap1d) from Danio rerio (Zebrafish).